We begin with the raw amino-acid sequence, 566 residues long: Good for full DBP5 activity protein 2 (566 aa).

The span at 1-16 (MQVQKMVRDNSNNGSD) shows a compositional bias: polar residues. The interval 1 to 41 (MQVQKMVRDNSNNGSDKSVHWERRNNNGAGPRYRSRSGNTG) is disordered.

In terms of biological role, high-copy suppressor of DBP5 mutation. The protein is Good for full DBP5 activity protein 2 (GFD2) of Saccharomyces cerevisiae (strain ATCC 204508 / S288c) (Baker's yeast).